Consider the following 195-residue polypeptide: Imidazoleglycerol-phosphate dehydratase (195 aa).

The protein belongs to the imidazoleglycerol-phosphate dehydratase family.

The protein resides in the cytoplasm. It catalyses the reaction D-erythro-1-(imidazol-4-yl)glycerol 3-phosphate = 3-(imidazol-4-yl)-2-oxopropyl phosphate + H2O. It functions in the pathway amino-acid biosynthesis; L-histidine biosynthesis; L-histidine from 5-phospho-alpha-D-ribose 1-diphosphate: step 6/9. The sequence is that of Imidazoleglycerol-phosphate dehydratase from Maridesulfovibrio salexigens (strain ATCC 14822 / DSM 2638 / NCIMB 8403 / VKM B-1763) (Desulfovibrio salexigens).